The sequence spans 570 residues: Fibropellin-3 (570 aa).

The first 17 residues, 1 to 17 (MKVSLLAVLLLSIVAAT), serve as a signal peptide directing secretion. The 38-residue stretch at 18–55 (YGQGECGSNPCENGSVCRDGEGTYICECQMGYDGQNCD) folds into the EGF-like 1 domain. 4 disulfide bridges follow: Cys-23-Cys-34, Cys-28-Cys-43, Cys-45-Cys-54, and Cys-62-Cys-88. N-linked (GlcNAc...) asparagine glycosylation occurs at Asn-30. A CUB domain is found at 62 to 175 (CGYNIFESTG…RKGFRITFSS (114 aa)). Residue Asn-136 is glycosylated (N-linked (GlcNAc...) asparagine). Positions 176 to 212 (DGDDCTPNPCLNGATCVDQVNDYQCICAPGFTGDNCE) constitute an EGF-like 2; calcium-binding domain. 22 disulfides stabilise this stretch: Cys-180–Cys-191, Cys-185–Cys-200, Cys-202–Cys-211, Cys-218–Cys-229, Cys-223–Cys-238, Cys-240–Cys-249, Cys-256–Cys-267, Cys-261–Cys-276, Cys-278–Cys-287, Cys-294–Cys-305, Cys-299–Cys-314, Cys-316–Cys-325, Cys-332–Cys-343, Cys-337–Cys-352, Cys-354–Cys-363, Cys-370–Cys-381, Cys-375–Cys-390, Cys-392–Cys-401, Cys-408–Cys-419, Cys-413–Cys-428, Cys-430–Cys-439, and Cys-445–Cys-521. One can recognise an EGF-like 3; calcium-binding domain in the interval 214–250 (DIDECASAPCRNGGACVDQVNGYTCNCIPGFNGVNCE). One can recognise an EGF-like 4; calcium-binding domain in the interval 252-288 (NINECASIPCLNGGICVDGINQFACTCLPGYTGILCE). An EGF-like 5; calcium-binding domain is found at 290 to 326 (DINECASSPCQNGGSCTDAVNRYTCDCRAGFTGSNCE). The EGF-like 6; calcium-binding domain maps to 328 to 364 (NINECASSPCLNGGSCLDGVDGYVCQCLPNYTGTHCE). A glycan (N-linked (GlcNAc...) asparagine) is linked at Asn-357. Residues 366–402 (SLDACASLPCQNGGVCTNVGGDYVCECLPGYTGINCE) form the EGF-like 7 domain. In terms of domain architecture, EGF-like 8; calcium-binding spans 404–440 (DINECASLPCQNGGECINGIAMYICQCRQGYAGVNCE). One can recognise an Avidin-like domain in the interval 443 to 562 (GFCDLEGVWF…GQDKWTRYEQ (120 aa)).

In terms of assembly, homotetramer.

It is found in the secreted. Its subcellular location is the extracellular space. Forms the apical lamina, a component of the extracellular matrix. In Strongylocentrotus purpuratus (Purple sea urchin), this protein is Fibropellin-3 (EGF3).